We begin with the raw amino-acid sequence, 20 residues long: Large ribosomal subunit protein bL31 (20 aa).

Zn(2+) is bound by residues Xaa-16 and Xaa-18.

This sequence belongs to the bacterial ribosomal protein bL31 family. Type A subfamily. In terms of assembly, part of the 50S ribosomal subunit. Zn(2+) serves as cofactor.

Functionally, binds the 23S rRNA. The polypeptide is Large ribosomal subunit protein bL31 (rpmE) (Ectopseudomonas mendocina (Pseudomonas mendocina)).